The following is a 510-amino-acid chain: RanBP-type and C3HC4-type zinc finger-containing protein 1 (510 aa).

Met-1 carries the N-acetylmethionine modification. Residues Met-1–Arg-220 are interaction with IRF3. The segment at Met-1–Gln-270 is interaction with TAB2. The residue at position 50 (Ser-50) is a Phosphoserine. The Ubiquitin-like domain occupies Ile-55–Val-119. Residues Val-69 to Leu-131 form an interaction with RNF31 region. The interval Leu-160–Pro-192 is disordered. Residues Pro-167–Pro-178 are compositionally biased toward pro residues. Residues Pro-193 to Glu-222 form a RanBP2-type zinc finger. A coiled-coil region spans residues Asp-233 to Asn-261. Positions Glu-278–Cys-506 are TRIAD supradomain. Zn(2+) contacts are provided by Cys-282, Cys-285, Cys-300, His-302, Cys-305, Cys-308, and Cys-323. Residues Cys-282–Cys-332 form an RING-type 1 zinc finger. Residue Tyr-330 is modified to Phosphotyrosine. Positions 332, 371, 376, 391, 394, 399, 402, 406, 411, 447, and 450 each coordinate Zn(2+). The IBR-type zinc-finger motif lies at Gln-351–Cys-411. The RING-type 2; atypical zinc finger occupies Cys-447 to Thr-476. Residue Cys-460 is part of the active site. Cys-465 and Cys-468 together coordinate Zn(2+).

The protein belongs to the RBR family. Component of the LUBAC complex (linear ubiquitin chain assembly complex) which consists of SHARPIN, RBCK1 and RNF31. LUBAC has a MW of approximately 600 kDa suggesting a heteromultimeric assembly of its subunits. Interacts with beta-I-type (PRKCB1) and zeta-type protein kinase C (PRKCZ). Interacts with UBE2L3. Interacts with PRKCH. Associates with the TNF-R1 signaling complex (TNF-RSC) in a stimulation-dependent manner. Interacts with EYA1, TAB2, TAB3, MAP3K7 TRAF6 and RIPK1. Interacts with IRF3. As to quaternary structure, interacts with IREB2 only in iron-rich conditions. In terms of assembly, (Microbial infection) Interacts with hepatitis B virus/HBV protein HBx; this interaction is required to activate transcription of the viral genome. Auto-ubiquitinated. Auto-ubiquitination leads to degradation by the proteasome. Post-translationally, phosphorylated. In vitro, phosphorylation inhibits auto-ubiquitination activity. In terms of processing, (Microbial infection) Ubiquitinated by S.flexneri E3 ubiquitin-protein ligases IpaH1.4 and IpaH2.5, leading to its degradation by the proteasome, thereby preventing formation of the bacterial ubiquitin coat and activation of innate immunity.

The catalysed reaction is [E2 ubiquitin-conjugating enzyme]-S-ubiquitinyl-L-cysteine + [acceptor protein]-L-lysine = [E2 ubiquitin-conjugating enzyme]-L-cysteine + [acceptor protein]-N(6)-ubiquitinyl-L-lysine.. The protein operates within protein modification; protein ubiquitination. Functionally, E3 ubiquitin-protein ligase, which accepts ubiquitin from specific E2 ubiquitin-conjugating enzymes, such as UBE2L3/UBCM4, and then transfers it to substrates. Functions as an E3 ligase for oxidized IREB2 and both heme and oxygen are necessary for IREB2 ubiquitination. Promotes ubiquitination of TAB2 and IRF3 and their degradation by the proteasome. Component of the LUBAC complex which conjugates linear ('Met-1'-linked) polyubiquitin chains to substrates and plays a key role in NF-kappa-B activation and regulation of inflammation. LUBAC conjugates linear polyubiquitin to IKBKG and RIPK1 and is involved in activation of the canonical NF-kappa-B and the JNK signaling pathways. Linear ubiquitination mediated by the LUBAC complex interferes with TNF-induced cell death and thereby prevents inflammation. LUBAC is recruited to the TNF-R1 signaling complex (TNF-RSC) following polyubiquitination of TNF-RSC components by BIRC2 and/or BIRC3 and to conjugate linear polyubiquitin to IKBKG and possibly other components contributing to the stability of the complex. The LUBAC complex is also involved in innate immunity by conjugating linear polyubiquitin chains at the surface of bacteria invading the cytosol to form the ubiquitin coat surrounding bacteria. LUBAC is not able to initiate formation of the bacterial ubiquitin coat, and can only promote formation of linear polyubiquitins on pre-existing ubiquitin. The bacterial ubiquitin coat acts as an 'eat-me' signal for xenophagy and promotes NF-kappa-B activation. Together with OTULIN, the LUBAC complex regulates the canonical Wnt signaling during angiogenesis. Binds polyubiquitin of different linkage types. In Homo sapiens (Human), this protein is RanBP-type and C3HC4-type zinc finger-containing protein 1 (RBCK1).